The chain runs to 502 residues: ATP synthase subunit alpha (502 aa).

169–176 (GDRQTGKT) contributes to the ATP binding site.

The protein belongs to the ATPase alpha/beta chains family. In terms of assembly, F-type ATPases have 2 components, CF(1) - the catalytic core - and CF(0) - the membrane proton channel. CF(1) has five subunits: alpha(3), beta(3), gamma(1), delta(1), epsilon(1). CF(0) has three main subunits: a(1), b(2) and c(9-12). The alpha and beta chains form an alternating ring which encloses part of the gamma chain. CF(1) is attached to CF(0) by a central stalk formed by the gamma and epsilon chains, while a peripheral stalk is formed by the delta and b chains.

Its subcellular location is the cell membrane. It carries out the reaction ATP + H2O + 4 H(+)(in) = ADP + phosphate + 5 H(+)(out). Functionally, produces ATP from ADP in the presence of a proton gradient across the membrane. The alpha chain is a regulatory subunit. This is ATP synthase subunit alpha from Desulfitobacterium hafniense (strain Y51).